Consider the following 134-residue polypeptide: Small ribosomal subunit protein uS8 (134 aa).

This sequence belongs to the universal ribosomal protein uS8 family. As to quaternary structure, part of the 30S ribosomal subunit. Contacts proteins S5 and S12.

One of the primary rRNA binding proteins, it binds directly to 16S rRNA central domain where it helps coordinate assembly of the platform of the 30S subunit. The protein is Small ribosomal subunit protein uS8 of Sphingopyxis alaskensis (strain DSM 13593 / LMG 18877 / RB2256) (Sphingomonas alaskensis).